A 249-amino-acid polypeptide reads, in one-letter code: tRNA (guanine-N(1)-)-methyltransferase (249 aa).

S-adenosyl-L-methionine is bound by residues Gly-113 and 133–138; that span reads IGDFVV.

Belongs to the RNA methyltransferase TrmD family. Homodimer.

The protein resides in the cytoplasm. The enzyme catalyses guanosine(37) in tRNA + S-adenosyl-L-methionine = N(1)-methylguanosine(37) in tRNA + S-adenosyl-L-homocysteine + H(+). Functionally, specifically methylates guanosine-37 in various tRNAs. The sequence is that of tRNA (guanine-N(1)-)-methyltransferase from Neisseria meningitidis serogroup C / serotype 2a (strain ATCC 700532 / DSM 15464 / FAM18).